The primary structure comprises 54 residues: ComX pheromone (54 aa).

Positions 1–46 (MQEIVGYLVKNPEVLDEVMKGRASLLNIDKDQLKSIVDAFGGLQIY) are excised as a propeptide. W51 carries the 3'-geranyl-2',N2-cyclotryptophan lipid modification.

Interacts directly with the sensor histidine kinase ComP and stimulates its activity. In terms of processing, trp-51 is modified by isoprenylation, probably by geranylation, which is essential for activity. Modified by the tryptophan prenyltransferase ComQ before export to the extracellular environment. The type of isoprenyl derivative differs among the different pherotypes and depends on ComX primary sequence.

The protein localises to the secreted. Its function is as follows. Part of a major quorum-sensing system that regulates the development of genetic competence. Acts through the activation of the two-component regulatory system ComP/ComA composed of a sensor histidine kinase, ComP, and a response regulator, ComA. This is ComX pheromone from Bacillus mojavensis.